An 830-amino-acid polypeptide reads, in one-letter code: DNA helicase MCM8 (830 aa).

The MCM domain maps to 392-599; sequence LLKLIVNSLC…QHDHLLSEHV (208 aa). 444 to 451 provides a ligand contact to ATP; the sequence is GDPGLGKS. A Phosphoserine modification is found at Ser-620.

The protein belongs to the MCM family. In terms of assembly, component of the MCM8-MCM9 complex, which forms a hexamer composed of MCM8 and MCM9. Interacts with the DNA mismatch repair (MMR) complex composed at least of MSH2, MSH3, MSH6, PMS1 and MLH1. Interacts with RAD51; the interaction recruits RAD51 to DNA damage sites. Interacts with the MRN complex composed of MRE11, RAD50 and NBN/NBS1. Interacts with CDC6 and ORC2. Interacts with HROB; the interaction recruits the MCM8-MCM9 complex to DNA damage sites.

It is found in the nucleus. Its subcellular location is the chromosome. The enzyme catalyses ATP + H2O = ADP + phosphate + H(+). Functionally, component of the MCM8-MCM9 complex, a complex involved in the repair of double-stranded DNA breaks (DBSs) and DNA interstrand cross-links (ICLs) by homologous recombination (HR). Required for DNA resection by the MRE11-RAD50-NBN/NBS1 (MRN) complex by recruiting the MRN complex to the repair site and by promoting the complex nuclease activity. Probably by regulating the localization of the MNR complex, indirectly regulates the recruitment of downstream effector RAD51 to DNA damage sites including DBSs and ICLs. The MCM8-MCM9 complex is dispensable for DNA replication and S phase progression. However, may play a non-essential for DNA replication: may be involved in the activation of the prereplicative complex (pre-RC) during G(1) phase by recruiting CDC6 to the origin recognition complex (ORC). Probably by regulating HR, plays a key role during gametogenesis. Stabilizes MCM9 protein. The protein is DNA helicase MCM8 (Mcm8) of Rattus norvegicus (Rat).